The sequence spans 457 residues: Metacaspase-1 (457 aa).

Positions 1 to 149 (MSWNQYPGGG…PQLQGQGGQS (149 aa)) are disordered. Residues 7–18 (PGGGHHQQGGYG) show a composition bias toward gly residues. Residues 20–56 (RPPPPQWAQQGPPPPPNMGYRPPPPPQAYYNNPPPPQ) show a composition bias toward pro residues. A compositionally biased stretch (low complexity) spans 57–83 (QYQRPAPQQNGYQQGGYQQQQQSQGNY). Catalysis depends on residues H247 and C303.

The protein belongs to the peptidase C14B family.

In terms of biological role, involved in cell death (apoptosis). The polypeptide is Metacaspase-1 (MCA1) (Cryptococcus neoformans var. neoformans serotype D (strain JEC21 / ATCC MYA-565) (Filobasidiella neoformans)).